The primary structure comprises 318 residues: tRNA(Ile)-lysidine synthase (318 aa).

Residue 26-31 participates in ATP binding; the sequence is SGGADS.

It belongs to the tRNA(Ile)-lysidine synthase family.

The protein localises to the cytoplasm. It carries out the reaction cytidine(34) in tRNA(Ile2) + L-lysine + ATP = lysidine(34) in tRNA(Ile2) + AMP + diphosphate + H(+). Ligates lysine onto the cytidine present at position 34 of the AUA codon-specific tRNA(Ile) that contains the anticodon CAU, in an ATP-dependent manner. Cytidine is converted to lysidine, thus changing the amino acid specificity of the tRNA from methionine to isoleucine. The protein is tRNA(Ile)-lysidine synthase of Nocardia farcinica (strain IFM 10152).